Here is a 365-residue protein sequence, read N- to C-terminus: UDP-N-acetylglucosamine--N-acetylmuramyl-(pentapeptide) pyrophosphoryl-undecaprenol N-acetylglucosamine transferase (365 aa).

Residues T19–G21, N131, R170, S201, I255, A274–E279, and Q300 each bind UDP-N-acetyl-alpha-D-glucosamine.

This sequence belongs to the glycosyltransferase 28 family. MurG subfamily.

It is found in the cell inner membrane. The enzyme catalyses di-trans,octa-cis-undecaprenyl diphospho-N-acetyl-alpha-D-muramoyl-L-alanyl-D-glutamyl-meso-2,6-diaminopimeloyl-D-alanyl-D-alanine + UDP-N-acetyl-alpha-D-glucosamine = di-trans,octa-cis-undecaprenyl diphospho-[N-acetyl-alpha-D-glucosaminyl-(1-&gt;4)]-N-acetyl-alpha-D-muramoyl-L-alanyl-D-glutamyl-meso-2,6-diaminopimeloyl-D-alanyl-D-alanine + UDP + H(+). The protein operates within cell wall biogenesis; peptidoglycan biosynthesis. In terms of biological role, cell wall formation. Catalyzes the transfer of a GlcNAc subunit on undecaprenyl-pyrophosphoryl-MurNAc-pentapeptide (lipid intermediate I) to form undecaprenyl-pyrophosphoryl-MurNAc-(pentapeptide)GlcNAc (lipid intermediate II). The sequence is that of UDP-N-acetylglucosamine--N-acetylmuramyl-(pentapeptide) pyrophosphoryl-undecaprenol N-acetylglucosamine transferase from Acinetobacter baumannii (strain SDF).